The primary structure comprises 159 residues: Transcriptional repressor NrdR (159 aa).

The segment at 3-34 (CPFCGGVENKVMDSRVSRDGNAIRRRRECLAC) is a zinc-finger region. The ATP-cone domain maps to 49-139 (PTVVKKDGRR…VYRQFRDVND (91 aa)).

It belongs to the NrdR family. Zn(2+) serves as cofactor.

Negatively regulates transcription of bacterial ribonucleotide reductase nrd genes and operons by binding to NrdR-boxes. This is Transcriptional repressor NrdR from Syntrophus aciditrophicus (strain SB).